A 258-amino-acid polypeptide reads, in one-letter code: Type III pantothenate kinase (258 aa).

6–13 is a binding site for ATP; it reads DVGNTQIF. 107–110 lines the substrate pocket; the sequence is GADR. The active-site Proton acceptor is Asp109. Position 130 (Asp130) interacts with K(+). Thr133 contacts ATP. Thr185 is a binding site for substrate.

The protein belongs to the type III pantothenate kinase family. Homodimer. NH4(+) serves as cofactor. It depends on K(+) as a cofactor.

It localises to the cytoplasm. It carries out the reaction (R)-pantothenate + ATP = (R)-4'-phosphopantothenate + ADP + H(+). Its pathway is cofactor biosynthesis; coenzyme A biosynthesis; CoA from (R)-pantothenate: step 1/5. In terms of biological role, catalyzes the phosphorylation of pantothenate (Pan), the first step in CoA biosynthesis. The protein is Type III pantothenate kinase of Elusimicrobium minutum (strain Pei191).